The following is a 245-amino-acid chain: 1-(5-phosphoribosyl)-5-[(5-phosphoribosylamino)methylideneamino] imidazole-4-carboxamide isomerase (245 aa).

D8 acts as the Proton acceptor in catalysis. The Proton donor role is filled by D130.

Belongs to the HisA/HisF family.

It localises to the cytoplasm. The enzyme catalyses 1-(5-phospho-beta-D-ribosyl)-5-[(5-phospho-beta-D-ribosylamino)methylideneamino]imidazole-4-carboxamide = 5-[(5-phospho-1-deoxy-D-ribulos-1-ylimino)methylamino]-1-(5-phospho-beta-D-ribosyl)imidazole-4-carboxamide. Its pathway is amino-acid biosynthesis; L-histidine biosynthesis; L-histidine from 5-phospho-alpha-D-ribose 1-diphosphate: step 4/9. The chain is 1-(5-phosphoribosyl)-5-[(5-phosphoribosylamino)methylideneamino] imidazole-4-carboxamide isomerase from Pseudomonas entomophila (strain L48).